The following is an 85-amino-acid chain: Small ribosomal subunit protein bS16 (85 aa).

The protein belongs to the bacterial ribosomal protein bS16 family.

This is Small ribosomal subunit protein bS16 from Pseudomonas syringae pv. tomato (strain ATCC BAA-871 / DC3000).